A 189-amino-acid chain; its full sequence is ECF RNA polymerase sigma-E factor (189 aa).

Residues 1–153 (MAEQLTDQAL…TAITLRELEG (153 aa)) are binds RNAP core. Residues 25 to 92 (LVSRYQNKVA…KNYLTAQGRR (68 aa)) are sigma-70 factor domain-2. The short motif at 48–61 (DVVQESFIKAYRSI) is the Polymerase core binding element. Residues 129–180 (RIVFDTIHNLPEDLKTAITLRELEGLSYEDIAEIMDCPVGTVRSRIFRAREM) are sigma-70 factor domain-4. Positions 156–175 (YEDIAEIMDCPVGTVRSRIF) form a DNA-binding region, H-T-H motif.

The protein belongs to the sigma-70 factor family. ECF subfamily. As to quaternary structure, interacts transiently with the RNAP catalytic core formed by RpoA, RpoB, RpoC and RpoZ (2 alpha, 1 beta, 1 beta' and 1 omega subunit) to form the RNAP holoenzyme that can initiate transcription. Interacts 1:1 with anti-sigma-E factor RseA which prevents binding to RNAP catalytic core.

The protein localises to the cytoplasm. ECF sigma-E is held in an inactive form by its cognate anti-sigma factor (RseA) until released by regulated intramembrane proteolysis (RIP). RIP occurs when an extracytoplasmic signal (periplasmic stress and excess LPS) triggers a concerted proteolytic cascade to transmit information and elicit cellular responses. The anti-sigma factor RseA is an inner membrane protein, binding sigma-E in the cytoplasm and RseB in the periplasm. RseA is first cut extracytoplasmically (site-1 protease, S1P, by DegS), then within the membrane itself (site-2 protease, S2P, by RseP), while cytoplasmic proteases (predominantly ClpX-ClpP) finish degrading the regulatory protein, liberating sigma-E. Degradation of RseA requires 2 signals to activate DegS; an outer membrane protein (OMP) signal activates DegS, while an LPS signal causes release of RseB from RseA, freeing RseA to be cleaved. Functionally, sigma factors are initiation factors that promote the attachment of RNA polymerase (RNAP) to specific initiation sites and are then released. Extracytoplasmic function (ECF) sigma-E controls the envelope stress response, responding to periplasmic protein stress, increased levels of periplasmic lipopolysaccharide (LPS) as well as heat shock and oxidative stress; it controls protein processing in the extracytoplasmic compartment. The protein is ECF RNA polymerase sigma-E factor (rpoE) of Haemophilus influenzae (strain ATCC 51907 / DSM 11121 / KW20 / Rd).